A 138-amino-acid polypeptide reads, in one-letter code: Large ribosomal subunit protein uL16 (138 aa).

The span at 1 to 19 (MLSPKRTKYRKAHKGRIHG) shows a compositional bias: basic residues. Residues 1-21 (MLSPKRTKYRKAHKGRIHGNA) are disordered.

Belongs to the universal ribosomal protein uL16 family. As to quaternary structure, part of the 50S ribosomal subunit.

Functionally, binds 23S rRNA and is also seen to make contacts with the A and possibly P site tRNAs. In Granulibacter bethesdensis (strain ATCC BAA-1260 / CGDNIH1), this protein is Large ribosomal subunit protein uL16.